Here is a 476-residue protein sequence, read N- to C-terminus: E3 SUMO-protein ligase EGR2 (476 aa).

The span at 127 to 141 (PASTTASSSVTSASP) shows a compositional bias: low complexity. The disordered stretch occupies residues 127 to 178 (PASTTASSSVTSASPNPLATGPLGVCTMSQTQPDLDHLYSPPPPPPPYSGCA). Positions 162–165 (DHLY) match the HCFC1-binding-motif (HBM) motif. Lys-247 is modified (N6-acetyllysine; by EP300). Disordered stretches follow at residues 275–300 (GPSA…SSSA) and 318–341 (RPIL…RPYP). Positions 281 to 290 (TGPGASGGSE) are enriched in gly residues. C2H2-type zinc fingers lie at residues 340–364 (YPCP…IRIH), 370–392 (FQCR…IRTH), and 398–420 (FACD…TKIH). The segment at 412 to 476 (ERKRHTKIHL…APCSSRTRTP (65 aa)) is disordered. Positions 415 to 425 (RHTKIHLRQKE) are enriched in basic residues. The span at 429-476 (SAPSASVPAPSTASCSGGVQPGGTLCSSNSSSLGGGPLAPCSSRTRTP) shows a compositional bias: low complexity.

This sequence belongs to the EGR C2H2-type zinc-finger protein family. In terms of assembly, interacts with HCFC1. Interacts with WWP2. Interacts with UBC9. Interacts with CITED1. Interacts (via phosphorylated form) with SFN. Ubiquitinated by WWP2 leading to proteasomal degradation. In terms of processing, acetylated at Lys-247. May be deacetylated by HDAC6, HDAC10 or SIRT1.

It is found in the nucleus. Its pathway is protein modification; protein sumoylation. Its function is as follows. Sequence-specific DNA-binding transcription factor. Plays a role in hindbrain segmentation by regulating the expression of a subset of homeobox containing genes and in Schwann cell myelination by regulating the expression of genes involved in the formation and maintenance of myelin. Binds to two EGR2-consensus sites EGR2A (5'-CTGTAGGAG-3') and EGR2B (5'-ATGTAGGTG-3') in the HOXB3 enhancer and promotes HOXB3 transcriptional activation. Binds to specific DNA sites located in the promoter region of HOXA4, HOXB2 and ERBB2. Regulates hindbrain segmentation by controlling the expression of Hox genes, such as HOXA4, HOXB3 and HOXB2, and thereby specifying odd and even rhombomeres. Promotes the expression of HOXB3 in the rhombomere r5 in the hindbrain. Regulates myelination in the peripheral nervous system after birth, possibly by regulating the expression of myelin proteins, such as MPZ, and by promoting the differentiation of Schwann cells. Involved in the development of the jaw openener musculature, probably by playing a role in its innervation through trigeminal motor neurons. May play a role in adipogenesis, possibly by regulating the expression of CEBPB. E3 SUMO-protein ligase helping SUMO1 conjugation to its coregulators NAB1 and NAB2, whose sumoylation down-regulates EGR2 transcriptional activity. The protein is E3 SUMO-protein ligase EGR2 (EGR2) of Homo sapiens (Human).